A 259-amino-acid polypeptide reads, in one-letter code: Type III pantothenate kinase (259 aa).

6–13 (DTGNTNTV) contacts ATP. Substrate is bound at residue 107–110 (GPDR). D109 acts as the Proton acceptor in catalysis. D129 is a binding site for K(+). T132 contributes to the ATP binding site. T184 is a binding site for substrate.

This sequence belongs to the type III pantothenate kinase family. Homodimer. The cofactor is NH4(+). K(+) is required as a cofactor.

The protein resides in the cytoplasm. It carries out the reaction (R)-pantothenate + ATP = (R)-4'-phosphopantothenate + ADP + H(+). The protein operates within cofactor biosynthesis; coenzyme A biosynthesis; CoA from (R)-pantothenate: step 1/5. Functionally, catalyzes the phosphorylation of pantothenate (Pan), the first step in CoA biosynthesis. The polypeptide is Type III pantothenate kinase (Paracoccus denitrificans (strain Pd 1222)).